Consider the following 213-residue polypeptide: Uracil phosphoribosyltransferase (213 aa).

5-phospho-alpha-D-ribose 1-diphosphate contacts are provided by residues R78, R103, and 131–139 (DPMLATGGT). Residues I197 and 202–204 (GDA) contribute to the uracil site. D203 is a binding site for 5-phospho-alpha-D-ribose 1-diphosphate.

The protein belongs to the UPRTase family. Requires Mg(2+) as cofactor.

The enzyme catalyses UMP + diphosphate = 5-phospho-alpha-D-ribose 1-diphosphate + uracil. It participates in pyrimidine metabolism; UMP biosynthesis via salvage pathway; UMP from uracil: step 1/1. Its activity is regulated as follows. Allosterically activated by GTP. In terms of biological role, catalyzes the conversion of uracil and 5-phospho-alpha-D-ribose 1-diphosphate (PRPP) to UMP and diphosphate. The chain is Uracil phosphoribosyltransferase from Bifidobacterium longum subsp. infantis (strain ATCC 15697 / DSM 20088 / JCM 1222 / NCTC 11817 / S12).